A 357-amino-acid polypeptide reads, in one-letter code: Type II methyltransferase M1.HgaI (357 aa).

Residues 5–357 (IMGLSLFSSA…NITREIFNEN (353 aa)) form the SAM-dependent MTase C5-type domain. The active site involves Cys-83.

Belongs to the class I-like SAM-binding methyltransferase superfamily. C5-methyltransferase family.

The enzyme catalyses a 2'-deoxycytidine in DNA + S-adenosyl-L-methionine = a 5-methyl-2'-deoxycytidine in DNA + S-adenosyl-L-homocysteine + H(+). Its function is as follows. A methylase that recognizes DNA with the sequence 5'-GCGTC-3', methylates C-2, and protects the DNA from cleavage by the HgaI endonuclease. The chain is Type II methyltransferase M1.HgaI (hgaIAM) from Avibacterium volantium (Pasteurella volantium).